A 266-amino-acid chain; its full sequence is Receptor-like protein 5 (266 aa).

The N-terminal stretch at 1–19 is a signal peptide; that stretch reads MINYRHIVFCLCVMVVVDS. At 20–169 the chain is on the extracellular side; that stretch reads RLTPYLAAIE…PTRNKNKPTV (150 aa). LRR repeat units lie at residues 93-117 and 119-143; these read LTSL…ITKL and NLTI…IVIL. An N-linked (GlcNAc...) asparagine glycan is attached at N119. Residues 170-190 form a helical membrane-spanning segment; sequence LVLLLGILVGLVVAGGASFGF. Topologically, residues 191–266 are cytoplasmic; it reads YLYRIRKQPK…TNQNPHLPYM (76 aa).

This sequence belongs to the RLP family.

It localises to the cell membrane. This is Receptor-like protein 5 from Arabidopsis thaliana (Mouse-ear cress).